A 417-amino-acid polypeptide reads, in one-letter code: Delta-aminolevulinic acid dehydratase, chloroplastic (417 aa).

The transit peptide at Met1–Thr40 directs the protein to the chloroplast. Residues Val63 to Leu92 form a disordered region. The active-site Schiff-base intermediate with substrate is the Lys286. Residues Arg296 and Lys308 each contribute to the 5-aminolevulinate site. Glu324 serves as a coordination point for Mg(2+). The active-site Schiff-base intermediate with substrate is Lys339. 5-aminolevulinate is bound by residues Ser365 and Tyr404.

The protein belongs to the ALAD family. Homooctamer. Mg(2+) is required as a cofactor.

It is found in the plastid. The protein resides in the chloroplast. The enzyme catalyses 2 5-aminolevulinate = porphobilinogen + 2 H2O + H(+). It functions in the pathway porphyrin-containing compound metabolism; protoporphyrin-IX biosynthesis; coproporphyrinogen-III from 5-aminolevulinate: step 1/4. Catalyzes an early step in the biosynthesis of tetrapyrroles. Binds two molecules of 5-aminolevulinate per subunit, each at a distinct site, and catalyzes their condensation to form porphobilinogen. This chain is Delta-aminolevulinic acid dehydratase, chloroplastic (HEMB), found in Selaginella martensii (Martens's spike moss).